The following is a 267-amino-acid chain: 4-hydroxy-tetrahydrodipicolinate reductase (267 aa).

Residues 9-14 and Asp-35 each bind NAD(+); that span reads GASGRM. Arg-36 is an NADP(+) binding site. NAD(+) is bound by residues 98-100 and 122-125; these read GTT and ASNF. His-155 acts as the Proton donor/acceptor in catalysis. Residue His-156 coordinates (S)-2,3,4,5-tetrahydrodipicolinate. The active-site Proton donor is the Lys-159. 165-166 contributes to the (S)-2,3,4,5-tetrahydrodipicolinate binding site; the sequence is GT.

This sequence belongs to the DapB family.

It is found in the cytoplasm. The catalysed reaction is (S)-2,3,4,5-tetrahydrodipicolinate + NAD(+) + H2O = (2S,4S)-4-hydroxy-2,3,4,5-tetrahydrodipicolinate + NADH + H(+). The enzyme catalyses (S)-2,3,4,5-tetrahydrodipicolinate + NADP(+) + H2O = (2S,4S)-4-hydroxy-2,3,4,5-tetrahydrodipicolinate + NADPH + H(+). It functions in the pathway amino-acid biosynthesis; L-lysine biosynthesis via DAP pathway; (S)-tetrahydrodipicolinate from L-aspartate: step 4/4. Its function is as follows. Catalyzes the conversion of 4-hydroxy-tetrahydrodipicolinate (HTPA) to tetrahydrodipicolinate. This is 4-hydroxy-tetrahydrodipicolinate reductase from Chromobacterium violaceum (strain ATCC 12472 / DSM 30191 / JCM 1249 / CCUG 213 / NBRC 12614 / NCIMB 9131 / NCTC 9757 / MK).